The primary structure comprises 280 residues: 4-diphosphocytidyl-2-C-methyl-D-erythritol kinase (280 aa).

Lysine 8 is an active-site residue. ATP is bound at residue 91–101 (PVAAGLAGGSS). Aspartate 133 is a catalytic residue.

The protein belongs to the GHMP kinase family. IspE subfamily.

The catalysed reaction is 4-CDP-2-C-methyl-D-erythritol + ATP = 4-CDP-2-C-methyl-D-erythritol 2-phosphate + ADP + H(+). It participates in isoprenoid biosynthesis; isopentenyl diphosphate biosynthesis via DXP pathway; isopentenyl diphosphate from 1-deoxy-D-xylulose 5-phosphate: step 3/6. Functionally, catalyzes the phosphorylation of the position 2 hydroxy group of 4-diphosphocytidyl-2C-methyl-D-erythritol. The sequence is that of 4-diphosphocytidyl-2-C-methyl-D-erythritol kinase from Clostridium kluyveri (strain NBRC 12016).